A 549-amino-acid chain; its full sequence is Elongator complex protein 3 (549 aa).

Positions 84-374 (RTASGIAVVA…YRVQRDIPMP (291 aa)) constitute a Radical SAM core domain. [4Fe-4S] cluster is bound by residues cysteine 101, cysteine 111, and cysteine 114. Acetyl-CoA-binding positions include lysine 166, 476–479 (ELHV), 499–501 (FGM), and tyrosine 532. Residues 398–549 (TECRDVRTRE…EGPYMVKKLD (152 aa)) enclose the N-acetyltransferase domain.

This sequence belongs to the ELP3 family. Component of the elongator complex. Interacts with transcriptional repressors snai1 and snai2; interaction with snai1 inhibits its ubiquitination and stabilizes it. Requires [4Fe-4S] cluster as cofactor.

It is found in the cytoplasm. Its subcellular location is the nucleus. The catalysed reaction is uridine(34) in tRNA + acetyl-CoA + S-adenosyl-L-methionine + H2O = 5-(carboxymethyl)uridine(34) in tRNA + 5'-deoxyadenosine + L-methionine + CoA + 2 H(+). Its pathway is tRNA modification; 5-methoxycarbonylmethyl-2-thiouridine-tRNA biosynthesis. Catalytic tRNA acetyltransferase subunit of the elongator complex which is required for multiple tRNA modifications, including mcm5U (5-methoxycarbonylmethyl uridine), mcm5s2U (5-methoxycarbonylmethyl-2-thiouridine), and ncm5U (5-carbamoylmethyl uridine). In the elongator complex, acts as a tRNA uridine(34) acetyltransferase by mediating formation of carboxymethyluridine in the wobble base at position 34 in tRNAs. Stabilizes transcriptional repressor snai1 by inhibiting its ubiquitination which promotes neural crest cell migration. This chain is Elongator complex protein 3, found in Xenopus tropicalis (Western clawed frog).